Reading from the N-terminus, the 194-residue chain is High mobility group protein B4 (194 aa).

2 consecutive DNA-binding regions (HMG box) follow at residues 9–79 (PKAN…MNYF) and 93–161 (PRRP…SVYR).

It belongs to the HMGB family.

It localises to the nucleus. It is found in the chromosome. This chain is High mobility group protein B4 (HMGB4), found in Bos taurus (Bovine).